The primary structure comprises 339 residues: tRNA dimethylallyltransferase (339 aa).

33-40 (GPTASGKT) lines the ATP pocket. 35 to 40 (TASGKT) contributes to the substrate binding site. Interaction with substrate tRNA stretches follow at residues 58–61 (DSLL) and 182–186 (QRIQR).

Belongs to the IPP transferase family. As to quaternary structure, monomer. It depends on Mg(2+) as a cofactor.

It carries out the reaction adenosine(37) in tRNA + dimethylallyl diphosphate = N(6)-dimethylallyladenosine(37) in tRNA + diphosphate. Its function is as follows. Catalyzes the transfer of a dimethylallyl group onto the adenine at position 37 in tRNAs that read codons beginning with uridine, leading to the formation of N6-(dimethylallyl)adenosine (i(6)A). This is tRNA dimethylallyltransferase from Acidithiobacillus ferrooxidans (strain ATCC 23270 / DSM 14882 / CIP 104768 / NCIMB 8455) (Ferrobacillus ferrooxidans (strain ATCC 23270)).